The following is a 455-amino-acid chain: Bifunctional protein GlmU (455 aa).

A pyrophosphorylase region spans residues 1–232 (MASTTGALIL…DPNLLGVNNP (232 aa)). UDP-N-acetyl-alpha-D-glucosamine is bound by residues 10–13 (LAAG), K24, Q75, and 80–81 (GT). D106 is a Mg(2+) binding site. 4 residues coordinate UDP-N-acetyl-alpha-D-glucosamine: G141, E155, N172, and N230. N230 provides a ligand contact to Mg(2+). The linker stretch occupies residues 233–253 (AELIRSEALLRTRLVIGHIEG). Residues 254–455 (GVLIHAPETV…QTNLPRKPKA (202 aa)) form an N-acetyltransferase region. Positions 336 and 354 each coordinate UDP-N-acetyl-alpha-D-glucosamine. H366 functions as the Proton acceptor in the catalytic mechanism. Residues Y369 and N380 each contribute to the UDP-N-acetyl-alpha-D-glucosamine site. Acetyl-CoA is bound by residues A383, 389–390 (NY), S408, A426, and R443.

The protein in the N-terminal section; belongs to the N-acetylglucosamine-1-phosphate uridyltransferase family. This sequence in the C-terminal section; belongs to the transferase hexapeptide repeat family. In terms of assembly, homotrimer. Requires Mg(2+) as cofactor.

It localises to the cytoplasm. The enzyme catalyses alpha-D-glucosamine 1-phosphate + acetyl-CoA = N-acetyl-alpha-D-glucosamine 1-phosphate + CoA + H(+). It carries out the reaction N-acetyl-alpha-D-glucosamine 1-phosphate + UTP + H(+) = UDP-N-acetyl-alpha-D-glucosamine + diphosphate. It participates in nucleotide-sugar biosynthesis; UDP-N-acetyl-alpha-D-glucosamine biosynthesis; N-acetyl-alpha-D-glucosamine 1-phosphate from alpha-D-glucosamine 6-phosphate (route II): step 2/2. The protein operates within nucleotide-sugar biosynthesis; UDP-N-acetyl-alpha-D-glucosamine biosynthesis; UDP-N-acetyl-alpha-D-glucosamine from N-acetyl-alpha-D-glucosamine 1-phosphate: step 1/1. It functions in the pathway bacterial outer membrane biogenesis; LPS lipid A biosynthesis. Its function is as follows. Catalyzes the last two sequential reactions in the de novo biosynthetic pathway for UDP-N-acetylglucosamine (UDP-GlcNAc). The C-terminal domain catalyzes the transfer of acetyl group from acetyl coenzyme A to glucosamine-1-phosphate (GlcN-1-P) to produce N-acetylglucosamine-1-phosphate (GlcNAc-1-P), which is converted into UDP-GlcNAc by the transfer of uridine 5-monophosphate (from uridine 5-triphosphate), a reaction catalyzed by the N-terminal domain. In Nitratidesulfovibrio vulgaris (strain DP4) (Desulfovibrio vulgaris), this protein is Bifunctional protein GlmU.